Consider the following 697-residue polypeptide: Elongation factor G (697 aa).

A tr-type G domain is found at 8-283; the sequence is ERCRNIGIMA…AVVDYLPSPL (276 aa). GTP is bound by residues 17-24, 81-85, and 135-138; these read AHIDAGKT, DTPGH, and NKID.

Belongs to the TRAFAC class translation factor GTPase superfamily. Classic translation factor GTPase family. EF-G/EF-2 subfamily.

The protein localises to the cytoplasm. In terms of biological role, catalyzes the GTP-dependent ribosomal translocation step during translation elongation. During this step, the ribosome changes from the pre-translocational (PRE) to the post-translocational (POST) state as the newly formed A-site-bound peptidyl-tRNA and P-site-bound deacylated tRNA move to the P and E sites, respectively. Catalyzes the coordinated movement of the two tRNA molecules, the mRNA and conformational changes in the ribosome. This is Elongation factor G from Koribacter versatilis (strain Ellin345).